Reading from the N-terminus, the 650-residue chain is Probable ATP-dependent RNA helicase DDX17 (650 aa).

The tract at residues 1-38 is disordered; it reads MRGGGFGDRDRDRDRGGFGARGGSGLPPKKFGNPGERL. Residues 7-16 show a composition bias toward basic and acidic residues; it reads GDRDRDRDRG. N6-acetyllysine is present on residues lysine 29, lysine 30, and lysine 42. Lysine 50 participates in a covalent cross-link: Glycyl lysine isopeptide (Lys-Gly) (interchain with G-Cter in SUMO); alternate. Lysine 50 is covalently cross-linked (Glycyl lysine isopeptide (Lys-Gly) (interchain with G-Cter in SUMO1); alternate). Lysine 50 is covalently cross-linked (Glycyl lysine isopeptide (Lys-Gly) (interchain with G-Cter in SUMO2); alternate). Residues 92–120 carry the Q motif motif; sequence FAFHHANFPQYVMDVLMDQHFTEPTPIQC. The Helicase ATP-binding domain occupies 123–298; the sequence is FPLALSGRDM…EDFLRDYTQI (176 aa). 136 to 143 lines the ATP pocket; sequence AQTGSGKT. The DEAD box motif lies at 246-249; that stretch reads DEAD. In terms of domain architecture, Helicase C-terminal spans 326–473; sequence KLIQLMEEIM…AINPKLMQLV (148 aa). Threonine 444 is modified (phosphothreonine). Residue lysine 449 forms a Glycyl lysine isopeptide (Lys-Gly) (interchain with G-Cter in SUMO2) linkage. Positions 468 to 650 are transactivation domain; the sequence is KLMQLVDHRG…PPPPPPPSRK (183 aa). Disordered stretches follow at residues 472 to 543 and 583 to 650; these read LVDH…YGSP and ASST…PSRK. Residues 489–499 are compositionally biased toward polar residues; it reads RTTSSANNPNL. Positions 504-531 are enriched in basic and acidic residues; that stretch reads ECDRRLRGVKDGGRRDSTSYRDRSETDR. Residues 583–609 show a composition bias toward low complexity; sequence ASSTASAGRSSQSSSQQFSGIGRSGQQ. Arginine 605 bears the Omega-N-methylarginine mark. A compositionally biased stretch (polar residues) spans 610–619; the sequence is PQPLMSQQFA. Residues 638-650 are compositionally biased toward pro residues; the sequence is YPPPPPPPPPSRK. The interaction with YAP1 stretch occupies residues 639–647; the sequence is PPPPPPPPP.

It belongs to the DEAD box helicase family. DDX5/DBP2 subfamily. Interacts with DDX5 in an RNA-independent manner. Interacts with CDK9 transcription elongation complex under basal conditions. Following cell stimulation with poly(I:C), a synthetic double-stranded RNA mimicking viral infection, the interaction with CDK9 is decreased. Interacts with ESR1 in an estrogen-independent manner. Interacts with HNRNPH1; this interaction is important for the regulation of alternative splicing on G-quadruplex structures. At high, but not low, cell density, interacts with DROSHA and DGCR8, the core components of the microprocessor complex involved in the maturation of primary microRNAs (pri-miRNAs) into pre-miRNAs. The interaction with DGCR8 is reduced during mitosis. At low, but not high, cell density, interacts with YAP1 and with its paralog, WWTR1/TAZ. Interactions with DROSHA and YAP1 are mutually exclusive. In vitro, the pre-miRNA processing activity of the DDX17-containing microprocessor complex is weaker than that of the DROSHA/DGCR8 microprocessor complex. Interacts with UPF3B. Interacts with NFAT5; this interaction leads to DDX17 recruitment to LNC2 and S100A4 promoters and NFAT5-mediated DDX17-enhanced transactivation. Interacts with HDAC1, HDAC2 and HDAC3; this interaction with HDAC1 and HDAC3, but not HDAC2, depends upon DDX17 acetylation. Interacts with ZC3HAV1 (via N-terminal domain) in an RNA-independent manner. Interacts with EXOSC3/RRP40 and EXOSC5/RRP46; this interaction may be indirect and mediated by ZC3HAV1-binding. Interacts with EP300; this interaction leads to acetylation at lysine residues. Interacts with CREBBP/CBP and KAT2B/P/CAF. Directly interacts with CTNNB1. Interacts with MYOD1. Interacts with TP53. Interacts with DCP1A in an RNA-independent manner. Interacts with DCP2 in an RNA-dependent manner. Interacts with DHX36; this interaction occurs in a RNA-dependent manner. Interacts with ERCC6. Post-translationally, sumoylation significantly increases stability. It also promotes interaction specifically with HDAC1 (but not HDAC2, nor HDAC3) and strongly stimulates ESR1 and TP53 coactivation. In terms of processing, acetylation at lysine residues stabilizes the protein, stimulates interaction with HDAC1 and HDAC3, but not HDAC2, and represses ESR1 and TP53 coactivation activity.

It localises to the nucleus. The protein localises to the nucleolus. It is found in the cytoplasm. Its subcellular location is the cytosol. The catalysed reaction is ATP + H2O = ADP + phosphate + H(+). In terms of biological role, as an RNA helicase, unwinds RNA and alters RNA structures through ATP binding and hydrolysis. Involved in multiple cellular processes, including pre-mRNA splicing, alternative splicing, ribosomal RNA processing and miRNA processing, as well as transcription regulation. Regulates the alternative splicing of exons exhibiting specific features. This function requires the RNA helicase activity. Affects NFAT5 and histone macro-H2A.1/MACROH2A1 alternative splicing in a CDK9-dependent manner. Affects splicing of mediators of steroid hormone signaling pathway, including kinases that phosphorylates ESR1 and transcriptional regulators. By acting splicing of regulatory factors, participates in ESR1 and AR stabilization. Promotes the inclusion of specific AC-rich alternative exons in CD44 transcripts. In myoblasts and epithelial cells, cooperates with HNRNPH1 to control the splicing of specific subsets of exons. In addition to binding mature mRNAs, also interacts with certain pri-microRNAs, including MIR132/miR-132, and stabilizes the primary transcript. Also participates in the MIR132 processing, resulting in significantly higher levels of mature MIR132 than MIR212 despite the fact that both are cotranscribed and co-regulated. Binding of pri-microRNAs may occur on the 3' segment flanking the stem loop via the 5'-[ACG]CAUC[ACU]-3' consensus sequence. Participates in MYC down-regulation at high cell density through the production of MYC-targeting microRNAs. Along with DDX5, may be involved in the processing of the 32S intermediate into the mature 28S rRNA. Promoter-specific transcription regulator, functioning as a coactivator or corepressor depending on the context of the promoter and the transcriptional complex in which it exists. Enhances NFAT5 transcriptional activity. Synergizes with TP53 in the activation of the MDM2 promoter; this activity requires acetylation on lysine residues. May also coactivate MDM2 transcription through a TP53-independent pathway. Coactivates MMP7 transcription. Along with CTNNB1, coactivates MYC, JUN, FOSL1 and cyclin D1/CCND1 transcription. Alone or in combination with DDX5 and/or SRA1 non-coding RNA, plays a critical role in promoting the assembly of proteins required for the formation of the transcription initiation complex and chromatin remodeling leading to coactivation of MYOD1-dependent transcription. This helicase-independent activity is required for skeletal muscle cells to properly differentiate into myotubes. During epithelial-to-mesenchymal transition, coregulates SMAD-dependent transcriptional activity, directly controlling key effectors of differentiation, including miRNAs which in turn directly repress its expression. Plays a role in estrogen and testosterone signaling pathway at several levels. Mediates the use of alternative promoters in estrogen-responsive genes and regulates transcription and splicing of a large number of steroid hormone target genes. Contrary to the splicing regulation activity, transcriptional coregulation of the estrogen receptor ESR1 is helicase activity-independent. Plays a role in innate immunity. Specifically restricts bunyavirus infection, including Rift Valley fever virus (RVFV) or La Crosse virus (LACV), but not vesicular stomatitis virus (VSV), in an interferon- and DROSHA-independent manner. Binds to RVFV RNA, likely via structured viral RNA elements. Promotes mRNA degradation mediated by the antiviral zinc-finger protein ZC3HAV1, in an ATPase-dependent manner. The polypeptide is Probable ATP-dependent RNA helicase DDX17 (Ddx17) (Mus musculus (Mouse)).